Here is a 460-residue protein sequence, read N- to C-terminus: uncharacterized protein (460 aa).

Residues 6–64 (PVKKNSTYNLYITGMGTKGEGIGKINNFTIFVTGAILGEEVEVNIIKVNKNYAVGKLLN) enclose the TRAM domain. [4Fe-4S] cluster contacts are provided by cysteine 77, cysteine 83, cysteine 86, and cysteine 163. The S-adenosyl-L-methionine site is built by glutamine 287, tyrosine 316, glutamate 337, and aspartate 385. Residue cysteine 412 is the Nucleophile of the active site.

Belongs to the class I-like SAM-binding methyltransferase superfamily. RNA M5U methyltransferase family.

This is an uncharacterized protein from Clostridium tetani (strain Massachusetts / E88).